Here is an 838-residue protein sequence, read N- to C-terminus: G-protein coupled receptor-associated sorting protein 2 (838 aa).

Disordered regions lie at residues 1-121 (MTGA…PGAR), 218-293 (ASNE…NPFS), and 531-552 (LELS…PSPE). Residues 13–31 (KPEKKAGEEVVAGPEREND) show a composition bias toward basic and acidic residues. The span at 220–235 (NESGFWSADETSTASS) shows a compositional bias: polar residues. Residues 255–271 (RSRHRAKHQTNPRSRPR) show a composition bias toward basic residues. 2 positions are modified to phosphoserine: serine 282 and serine 284. Positions 542-552 (SLLQPDQPSPE) are enriched in polar residues.

This sequence belongs to the GPRASP family. Interacts with cytoplasmic tails of a variety of G protein-coupled receptors such as muscarinic acetylcholine receptor M1/CHRM1 and calcitonin receptor/CALCR.

May play a role in regulation of a variety of G-protein coupled receptors. The sequence is that of G-protein coupled receptor-associated sorting protein 2 (GPRASP2) from Pongo abelii (Sumatran orangutan).